A 329-amino-acid chain; its full sequence is VSG expression site-associated protein 221A (329 aa).

Residues 1 to 23 (MKVEIVELVVLLFSVTCVDAWLQ) form the signal peptide. N-linked (GlcNAc...) asparagine glycosylation is found at asparagine 73, asparagine 294, and asparagine 308.

In terms of biological role, not known but may be related to activation of the variant surface glycoprotein genes. This is VSG expression site-associated protein 221A from Trypanosoma brucei brucei.